The chain runs to 548 residues: Membrane protein insertase YidC (548 aa).

A helical membrane pass occupies residues 6–26 (NLFLIAFLFVSFMIWQAWQTD). Residues 30 to 53 (QPLQTQTTQNTTSAAGDAVNQGVP) are disordered. Helical transmembrane passes span 345–365 (KFLH…TFIV), 420–440 (LGGC…YYML), 458–478 (LAAQ…MFFI), and 499–519 (PVIF…YYIV).

Belongs to the OXA1/ALB3/YidC family. Type 1 subfamily. Interacts with the Sec translocase complex via SecD. Specifically interacts with transmembrane segments of nascent integral membrane proteins during membrane integration.

It localises to the cell inner membrane. Its function is as follows. Required for the insertion and/or proper folding and/or complex formation of integral membrane proteins into the membrane. Involved in integration of membrane proteins that insert both dependently and independently of the Sec translocase complex, as well as at least some lipoproteins. Aids folding of multispanning membrane proteins. This chain is Membrane protein insertase YidC, found in Erwinia tasmaniensis (strain DSM 17950 / CFBP 7177 / CIP 109463 / NCPPB 4357 / Et1/99).